The sequence spans 325 residues: Glutarate 2-hydroxylase (325 aa).

Fe cation-binding residues include H160, D162, and H292.

The protein belongs to the glutarate hydroxylase family. Homotetramer. The cofactor is Fe(2+).

The catalysed reaction is glutarate + 2-oxoglutarate + O2 = (S)-2-hydroxyglutarate + succinate + CO2. It functions in the pathway amino-acid degradation. Its function is as follows. Acts as an alpha-ketoglutarate-dependent dioxygenase catalyzing hydroxylation of glutarate (GA) to L-2-hydroxyglutarate (L2HG). Functions in a L-lysine degradation pathway that proceeds via cadaverine, glutarate and L-2-hydroxyglutarate. In Shigella boydii serotype 18 (strain CDC 3083-94 / BS512), this protein is Glutarate 2-hydroxylase.